We begin with the raw amino-acid sequence, 632 residues long: Epithelial sodium channel subunit alpha (632 aa).

Residues 1-49 are Cytoplasmic-facing; that stretch reads MTKEEKNEKEALIEFFSSYRELFEFFCSNTTIHGAIRLVCSRRNRMKTA. Residues 50–70 traverse the membrane as a helical segment; sequence FWLVLFLVTFGLMYWQFGLLF. Residues 71–520 lie on the Extracellular side of the membrane; that stretch reads GQYFSYPVSI…SQWSLWFGSS (450 aa). Disulfide bonds link Cys97/Cys264, Cys189/Cys196, Cys241/Cys248, Cys355/Cys440, Cys377/Cys417, Cys377/Cys436, Cys381/Cys432, Cys390/Cys417, Cys390/Cys440, and Cys392/Cys406. A helical membrane pass occupies residues 521–541; sequence VLSVVEMLELVIDFVIIGVMI. The Cytoplasmic portion of the chain corresponds to 542 to 632; that stretch reads LLHRYYYKKA…YYEENGGRRN (91 aa). The span at 612–622 shows a compositional bias: low complexity; sequence SRSSSMRSNRS. Residues 612–632 are disordered; sequence SRSSSMRSNRSYYEENGGRRN. Positions 623-632 are enriched in basic and acidic residues; sequence YYEENGGRRN.

The protein belongs to the amiloride-sensitive sodium channel (TC 1.A.6) family. SCNN1A subfamily. In terms of assembly, heterotrimer; containing an alpha/SCNN1A, a beta/SCNN1B and a gamma/SCNN1G subunit. Interacts with shroom1.

It localises to the apical cell membrane. The protein localises to the cell projection. It is found in the cilium. Its subcellular location is the cytoplasmic granule. The protein resides in the cytoplasm. It localises to the cytoplasmic vesicle. The protein localises to the secretory vesicle. It is found in the acrosome. Its subcellular location is the flagellum. The catalysed reaction is Na(+)(in) = Na(+)(out). With respect to regulation, originally identified and characterized by its inhibition by the diuretic drug amiloride. Functionally, this is one of the three pore-forming subunits of the heterotrimeric epithelial sodium channel (ENaC), a critical regulator of sodium balance and fluid homeostasis. ENaC operates in epithelial tissues, where it mediates the electrodiffusion of sodium ions from extracellular fluid through the apical membrane of cells, with water following osmotically. It plays a key role in maintaining sodium homeostasis through electrogenic sodium reabsorption in the kidneys. In Xenopus laevis (African clawed frog), this protein is Epithelial sodium channel subunit alpha.